A 262-amino-acid polypeptide reads, in one-letter code: WW domain-binding protein 2 (262 aa).

In terms of domain architecture, GRAM spans 1-84 (MALNKNHSEG…YLMKDCEVKQ (84 aa)). A Phosphotyrosine modification is found at Tyr192. Positions 196-200 (PPPPY) match the PPxY motif 1 motif. The segment covering 197–206 (PPPYPGPMEP) has biased composition (pro residues). Residues 197–262 (PPPYPGPMEP…YYPPEDKKTQ (66 aa)) are disordered. Over residues 219-231 (AAEAKAAEAAASA) the composition is skewed to low complexity. Phosphotyrosine is present on Tyr232. Pro residues predominate over residues 246–255 (SQPPPPPYYP). Residues 249 to 253 (PPPPY) carry the PPxY motif 2 motif.

As to quaternary structure, binds to the WW domain of YAP1, WWP1 and WWP2. Interacts with NEDD4. Interacts with ESR1 and UBE3A. In terms of processing, phosphorylated in repsonse to EGF as well as estrogen and progesterone hormones. Tyr-192 and Tyr-232 are phosphorylated by YES and SRC inducing nuclear translocation.

It is found in the cytoplasm. It localises to the nucleus. Acts as a transcriptional coactivator of estrogen and progesterone receptors (ESR1 and PGR) upon hormone activation. In presence of estrogen, binds to ESR1-responsive promoters. Synergizes with YAP1 to enhance PGR activity. Modulates expression of post-synaptic scaffolding proteins via regulation of ESR1, ESR2 and PGR. This is WW domain-binding protein 2 (Wbp2) from Rattus norvegicus (Rat).